Here is a 193-residue protein sequence, read N- to C-terminus: ATP-dependent Clp protease proteolytic subunit (193 aa).

The active-site Nucleophile is the S98. H123 is an active-site residue.

Belongs to the peptidase S14 family. As to quaternary structure, fourteen ClpP subunits assemble into 2 heptameric rings which stack back to back to give a disk-like structure with a central cavity, resembling the structure of eukaryotic proteasomes.

The protein localises to the cytoplasm. The enzyme catalyses Hydrolysis of proteins to small peptides in the presence of ATP and magnesium. alpha-casein is the usual test substrate. In the absence of ATP, only oligopeptides shorter than five residues are hydrolyzed (such as succinyl-Leu-Tyr-|-NHMec, and Leu-Tyr-Leu-|-Tyr-Trp, in which cleavage of the -Tyr-|-Leu- and -Tyr-|-Trp bonds also occurs).. Cleaves peptides in various proteins in a process that requires ATP hydrolysis. Has a chymotrypsin-like activity. Plays a major role in the degradation of misfolded proteins. ClpXP is involved in the complete degradation of the Site-2 clipped anti-sigma-W factor RsiW. This results in the release of SigW and the transcription activation of the genes under the control of the sigma-W factor. This chain is ATP-dependent Clp protease proteolytic subunit, found in Oceanobacillus iheyensis (strain DSM 14371 / CIP 107618 / JCM 11309 / KCTC 3954 / HTE831).